The sequence spans 101 residues: Thiosulfate sulfurtransferase GlpE (101 aa).

The Rhodanese domain occupies 17–101 (EAKSVQIVDI…GFSAWHEANA (85 aa)). The active-site Cysteine persulfide intermediate is C65.

It belongs to the GlpE family.

Its subcellular location is the cytoplasm. It carries out the reaction thiosulfate + hydrogen cyanide = thiocyanate + sulfite + 2 H(+). It catalyses the reaction thiosulfate + [thioredoxin]-dithiol = [thioredoxin]-disulfide + hydrogen sulfide + sulfite + 2 H(+). Its function is as follows. Transferase that catalyzes the transfer of sulfur from thiosulfate to thiophilic acceptors such as cyanide or dithiols. May function in a CysM-independent thiosulfate assimilation pathway by catalyzing the conversion of thiosulfate to sulfite, which can then be used for L-cysteine biosynthesis. The chain is Thiosulfate sulfurtransferase GlpE from Shewanella oneidensis (strain ATCC 700550 / JCM 31522 / CIP 106686 / LMG 19005 / NCIMB 14063 / MR-1).